The sequence spans 363 residues: Protein RecA (363 aa).

ATP is bound at residue 79 to 86; it reads GPESSGKT.

Belongs to the RecA family.

It is found in the cytoplasm. Functionally, can catalyze the hydrolysis of ATP in the presence of single-stranded DNA, the ATP-dependent uptake of single-stranded DNA by duplex DNA, and the ATP-dependent hybridization of homologous single-stranded DNAs. It interacts with LexA causing its activation and leading to its autocatalytic cleavage. The polypeptide is Protein RecA (Methylobacterium radiotolerans (strain ATCC 27329 / DSM 1819 / JCM 2831 / NBRC 15690 / NCIMB 10815 / 0-1)).